A 714-amino-acid chain; its full sequence is Fumarate reductase flavoprotein subunit (714 aa).

FAD-binding positions include 13–16, 42–44, and 49–50; these read GGLA, SHS, and GG. Tele-8alpha-FAD histidine is present on His43. Catalysis depends on residues His257 and Arg273. FAD is bound by residues Glu420 and 436-437; that span reads SV.

Belongs to the FAD-dependent oxidoreductase 2 family. FRD/SDH subfamily. Part of an enzyme complex containing three subunits: a flavoprotein (frdA), an iron-sulfur protein (frdB), and diheme cytochrome b (frdC). FAD serves as cofactor.

The protein localises to the cell inner membrane. The catalysed reaction is a quinone + succinate = fumarate + a quinol. The fumarate reductase enzyme complex is required for fumarate respiration. The protein is Fumarate reductase flavoprotein subunit (frdA) of Helicobacter pylori (strain ATCC 700392 / 26695) (Campylobacter pylori).